The following is a 193-amino-acid chain: dCTP deaminase (193 aa).

DCTP contacts are provided by residues 110 to 115, D128, 136 to 138, Y171, K178, and Q182; these read RSSLAR and VLE. The active-site Proton donor/acceptor is E138.

This sequence belongs to the dCTP deaminase family. Homotrimer.

The enzyme catalyses dCTP + H2O + H(+) = dUTP + NH4(+). The protein operates within pyrimidine metabolism; dUMP biosynthesis; dUMP from dCTP (dUTP route): step 1/2. Functionally, catalyzes the deamination of dCTP to dUTP. The sequence is that of dCTP deaminase from Buchnera aphidicola subsp. Acyrthosiphon pisum (strain APS) (Acyrthosiphon pisum symbiotic bacterium).